Here is an 807-residue protein sequence, read N- to C-terminus: AP-5 complex subunit zeta-1 (807 aa).

In terms of assembly, probably part of the adaptor protein complex 5 (AP-5) a tetramer composed of AP5B1, AP5M1, AP5S1 and AP5Z1. Interacts with ZFYVE26 and SPG11.

It localises to the cytoplasm. Its subcellular location is the nucleus. Its function is as follows. As part of AP-5, a probable fifth adaptor protein complex it may be involved in endosomal transport. According to PubMed:20613862 it is a putative helicase required for efficient homologous recombination DNA double-strand break repair. In Homo sapiens (Human), this protein is AP-5 complex subunit zeta-1 (AP5Z1).